The following is a 485-amino-acid chain: Fumarate hydratase, mitochondrial (485 aa).

The transit peptide at 1-19 (MLSASRKLNNQQFLKTIRN) directs the protein to the mitochondrion. Substrate contacts are provided by residues 118 to 120 (SGT), 150 to 153 (HPND), 160 to 162 (SSN), and Thr208. The active-site Proton donor/acceptor is His209. Ser339 is a catalytic residue. Substrate contacts are provided by residues Ser340 and 345 to 347 (KVN).

This sequence belongs to the class-II fumarase/aspartase family. Fumarase subfamily. Homotetramer.

It localises to the mitochondrion. Its subcellular location is the cytoplasm. It catalyses the reaction (S)-malate = fumarate + H2O. Its pathway is carbohydrate metabolism; tricarboxylic acid cycle; (S)-malate from fumarate: step 1/1. In terms of biological role, catalyzes the reversible stereospecific interconversion of fumarate to L-malate. Functionally, catalyzes the hydration of fumarate to L-malate in the tricarboxylic acid (TCA) cycle to facilitate a transition step in the production of energy in the form of NADH. The chain is Fumarate hydratase, mitochondrial from Dictyostelium discoideum (Social amoeba).